Here is a 231-residue protein sequence, read N- to C-terminus: Probable septum site-determining protein MinC (231 aa).

The disordered stretch occupies residues 101–125 (GKEKAPRPAPTPQAPAQNTTPVTKT). Positions 114–123 (APAQNTTPVT) are enriched in low complexity.

The protein belongs to the MinC family. In terms of assembly, interacts with MinD and FtsZ.

In terms of biological role, cell division inhibitor that blocks the formation of polar Z ring septums. Rapidly oscillates between the poles of the cell to destabilize FtsZ filaments that have formed before they mature into polar Z rings. Prevents FtsZ polymerization. This Escherichia coli (strain ATCC 8739 / DSM 1576 / NBRC 3972 / NCIMB 8545 / WDCM 00012 / Crooks) protein is Probable septum site-determining protein MinC.